The sequence spans 419 residues: UDP-N-acetylglucosamine 1-carboxyvinyltransferase (419 aa).

K22–N23 contacts phosphoenolpyruvate. Residue R93 participates in UDP-N-acetyl-alpha-D-glucosamine binding. C117 (proton donor) is an active-site residue. C117 carries the 2-(S-cysteinyl)pyruvic acid O-phosphothioketal modification. The UDP-N-acetyl-alpha-D-glucosamine site is built by D307 and I329.

The protein belongs to the EPSP synthase family. MurA subfamily.

The protein localises to the cytoplasm. The catalysed reaction is phosphoenolpyruvate + UDP-N-acetyl-alpha-D-glucosamine = UDP-N-acetyl-3-O-(1-carboxyvinyl)-alpha-D-glucosamine + phosphate. It functions in the pathway cell wall biogenesis; peptidoglycan biosynthesis. Cell wall formation. Adds enolpyruvyl to UDP-N-acetylglucosamine. The polypeptide is UDP-N-acetylglucosamine 1-carboxyvinyltransferase (Shewanella woodyi (strain ATCC 51908 / MS32)).